The following is a 215-amino-acid chain: Protein-L-isoaspartate O-methyltransferase (215 aa).

Serine 62 is an active-site residue.

The protein belongs to the methyltransferase superfamily. L-isoaspartyl/D-aspartyl protein methyltransferase family.

Its subcellular location is the cytoplasm. It carries out the reaction [protein]-L-isoaspartate + S-adenosyl-L-methionine = [protein]-L-isoaspartate alpha-methyl ester + S-adenosyl-L-homocysteine. Its function is as follows. Catalyzes the methyl esterification of L-isoaspartyl residues in peptides and proteins that result from spontaneous decomposition of normal L-aspartyl and L-asparaginyl residues. It plays a role in the repair and/or degradation of damaged proteins. This Ruegeria sp. (strain TM1040) (Silicibacter sp.) protein is Protein-L-isoaspartate O-methyltransferase.